The following is an 867-amino-acid chain: Mitochondrial escape protein 2 (867 aa).

2 disordered regions span residues 1–20 (MISA…RGPR) and 44–66 (RTTR…KESG). The transit peptide at 1-41 (MISAHILSRQATRPGHRGPRFTTHSTALLVQRSLGQGLPLA) directs the protein to the mitochondrion. Residues 42 to 308 (HRRTTRAWES…IWAWFTSHPR (267 aa)) lie on the Mitochondrial matrix side of the membrane. Low complexity predominate over residues 48-59 (AWESTSSSTAST). One can recognise an RRM domain in the interval 203 to 293 (SRIRVEFVAA…TKLRLSYEQR (91 aa)). A helical transmembrane segment spans residues 309–329 (IVIPLVAALIAAFTVAVFDPI). The Mitochondrial intermembrane portion of the chain corresponds to 330–867 (REFFVKAHVQ…GVVKGQMVKG (538 aa)). Residues 614 to 639 (FAHDGQQKDSESGDQDNDNKNQKKDS) are compositionally biased toward basic and acidic residues. The disordered stretch occupies residues 614-647 (FAHDGQQKDSESGDQDNDNKNQKKDSNTPAPLDP). Positions 797–857 (LLVLTELAKM…ARLKGLEKEM (61 aa)) form a coiled coil.

The protein belongs to the YME2 family.

Its subcellular location is the mitochondrion inner membrane. Functionally, plays a role in maintaining the mitochondrial genome and in controlling the mtDNA escape. Involved in the regulation of mtDNA nucleotide structure and number. May have a dispensable role in early maturation of pre-rRNA. This is Mitochondrial escape protein 2 (msp-45) from Neurospora crassa (strain ATCC 24698 / 74-OR23-1A / CBS 708.71 / DSM 1257 / FGSC 987).